Here is a 194-residue protein sequence, read N- to C-terminus: Large ribosomal subunit protein bL9 (194 aa).

The segment at 169-194 is disordered; sequence DDINDNARPENFFDPNAEFDGGEDNA.

Belongs to the bacterial ribosomal protein bL9 family.

Its function is as follows. Binds to the 23S rRNA. This is Large ribosomal subunit protein bL9 from Mesorhizobium japonicum (strain LMG 29417 / CECT 9101 / MAFF 303099) (Mesorhizobium loti (strain MAFF 303099)).